The following is a 311-amino-acid chain: Manganese-dependent inorganic pyrophosphatase (311 aa).

Residues His10, Asp14, Asp16, Asp75, His97, and Asp149 each coordinate Mn(2+).

The protein belongs to the PPase class C family. As to quaternary structure, homodimer. Mn(2+) is required as a cofactor.

It carries out the reaction diphosphate + H2O = 2 phosphate + H(+). The sequence is that of Manganese-dependent inorganic pyrophosphatase (ppaC) from Methanothrix thermoacetophila (strain DSM 6194 / JCM 14653 / NBRC 101360 / PT) (Methanosaeta thermophila).